Reading from the N-terminus, the 200-residue chain is NAD(P)H dehydrogenase (quinone) (200 aa).

The 188-residue stretch at 4–191 (VLVLYYSSYG…DIARYQGKHV (188 aa)) folds into the Flavodoxin-like domain. FMN is bound by residues 10-15 (SSYGHV) and 79-81 (TRF). Residue tyrosine 12 participates in NAD(+) binding. Tryptophan 99 is a substrate binding site. FMN-binding positions include 114–120 (STGTQHG) and histidine 135.

It belongs to the WrbA family. Requires FMN as cofactor.

It catalyses the reaction a quinone + NADH + H(+) = a quinol + NAD(+). The catalysed reaction is a quinone + NADPH + H(+) = a quinol + NADP(+). The sequence is that of NAD(P)H dehydrogenase (quinone) from Burkholderia vietnamiensis (strain G4 / LMG 22486) (Burkholderia cepacia (strain R1808)).